The following is a 450-amino-acid chain: BAG family molecular chaperone regulator 5 (450 aa).

5 BAG domains span residues 9-86 (SIKR…EQNA), 95-167 (EAIF…ESCA), 182-260 (SVSK…DLDE), 275-350 (SILK…DLKE), and 365-442 (EHQS…YYLD).

As to quaternary structure, binds to the ATPase domain of HSP/HSC70 chaperones.

Co-chaperone for HSP/HSP70 proteins. It functions as a nucleotide-exchange factor promoting the release of ADP from HSP70, thereby activating HSP70-mediated protein refolding. In Gallus gallus (Chicken), this protein is BAG family molecular chaperone regulator 5 (BAG5).